A 154-amino-acid polypeptide reads, in one-letter code: Putative pre-16S rRNA nuclease (154 aa).

Belongs to the YqgF nuclease family.

It localises to the cytoplasm. Functionally, could be a nuclease involved in processing of the 5'-end of pre-16S rRNA. The polypeptide is Putative pre-16S rRNA nuclease (Rickettsia bellii (strain OSU 85-389)).